Here is a 122-residue protein sequence, read N- to C-terminus: Ribonuclease P protein component (122 aa).

The protein belongs to the RnpA family. Consists of a catalytic RNA component (M1 or rnpB) and a protein subunit.

It catalyses the reaction Endonucleolytic cleavage of RNA, removing 5'-extranucleotides from tRNA precursor.. Functionally, RNaseP catalyzes the removal of the 5'-leader sequence from pre-tRNA to produce the mature 5'-terminus. It can also cleave other RNA substrates such as 4.5S RNA. The protein component plays an auxiliary but essential role in vivo by binding to the 5'-leader sequence and broadening the substrate specificity of the ribozyme. The sequence is that of Ribonuclease P protein component from Halorhodospira halophila (strain DSM 244 / SL1) (Ectothiorhodospira halophila (strain DSM 244 / SL1)).